Consider the following 289-residue polypeptide: MAGAKEIKTKIASVQSTQKITKAMEMVATSKMRKTQDRMAASRPYSETIRNVISHVSKASIGYKHPFLVECEVKKIGILVISTDRGMCGGLNVNLFKTTLNQIKNWKEQNISTDLGLIGSKGISFFRSFGFNIKGQLSGLGDTPALEELIGVANTMFDAYRNGEIDAVYIAYNKFVNTMSQKPVVQQLVPLPESKDDHLNERQQTWDYLYEPEPKALLDSLLVRYLESQIYQAVVDNLASEQAARMVAMKAATDNAGNLINDLRLVYNKARQASITNELNEIVAGAAAI.

This sequence belongs to the ATPase gamma chain family. F-type ATPases have 2 components, CF(1) - the catalytic core - and CF(0) - the membrane proton channel. CF(1) has five subunits: alpha(3), beta(3), gamma(1), delta(1), epsilon(1). CF(0) has three main subunits: a, b and c.

The protein localises to the cell inner membrane. Its function is as follows. Produces ATP from ADP in the presence of a proton gradient across the membrane. The gamma chain is believed to be important in regulating ATPase activity and the flow of protons through the CF(0) complex. This Haemophilus influenzae (strain 86-028NP) protein is ATP synthase gamma chain.